Consider the following 394-residue polypeptide: Elongation factor Tu 2 (394 aa).

A tr-type G domain is found at 10–204; sequence KPHVNVGTIG…FLDSYIPEPE (195 aa). The tract at residues 19–26 is G1; it reads GHVDHGKT. 19 to 26 provides a ligand contact to GTP; sequence GHVDHGKT. Thr-26 provides a ligand contact to Mg(2+). Residues 60–64 are G2; sequence GITIN. The G3 stretch occupies residues 81–84; it reads DCPG. GTP contacts are provided by residues 81-85 and 136-139; these read DCPGH and NKCD. The tract at residues 136–139 is G4; the sequence is NKCD. The tract at residues 174-176 is G5; sequence SAL.

Belongs to the TRAFAC class translation factor GTPase superfamily. Classic translation factor GTPase family. EF-Tu/EF-1A subfamily. Monomer.

Its subcellular location is the cytoplasm. It carries out the reaction GTP + H2O = GDP + phosphate + H(+). Its function is as follows. GTP hydrolase that promotes the GTP-dependent binding of aminoacyl-tRNA to the A-site of ribosomes during protein biosynthesis. The protein is Elongation factor Tu 2 of Escherichia coli O139:H28 (strain E24377A / ETEC).